A 141-amino-acid polypeptide reads, in one-letter code: Small ribosomal subunit protein uS12 (141 aa).

A compositionally biased stretch (polar residues) spans 1–11; it reads MPTISQLVTTS. The disordered stretch occupies residues 1-22; that stretch reads MPTISQLVTTSRQDKNYKSKSP. Asp-102 carries the post-translational modification 3-methylthioaspartic acid.

It belongs to the universal ribosomal protein uS12 family. Part of the 30S ribosomal subunit. Contacts proteins S8 and S17. May interact with IF1 in the 30S initiation complex.

In terms of biological role, with S4 and S5 plays an important role in translational accuracy. Functionally, interacts with and stabilizes bases of the 16S rRNA that are involved in tRNA selection in the A site and with the mRNA backbone. Located at the interface of the 30S and 50S subunits, it traverses the body of the 30S subunit contacting proteins on the other side and probably holding the rRNA structure together. The combined cluster of proteins S8, S12 and S17 appears to hold together the shoulder and platform of the 30S subunit. This chain is Small ribosomal subunit protein uS12, found in Acholeplasma laidlawii (strain PG-8A).